We begin with the raw amino-acid sequence, 407 residues long: Imidazolonepropionase (407 aa).

Residues histidine 68 and histidine 70 each coordinate Fe(3+). Residues histidine 68 and histidine 70 each coordinate Zn(2+). Residues arginine 77, tyrosine 140, and histidine 173 each contribute to the 4-imidazolone-5-propanoate site. Tyrosine 140 lines the N-formimidoyl-L-glutamate pocket. Histidine 236 provides a ligand contact to Fe(3+). Histidine 236 is a binding site for Zn(2+). 4-imidazolone-5-propanoate is bound at residue glutamine 239. Residue aspartate 311 coordinates Fe(3+). Aspartate 311 serves as a coordination point for Zn(2+). Asparagine 313 and glycine 315 together coordinate N-formimidoyl-L-glutamate. Threonine 316 serves as a coordination point for 4-imidazolone-5-propanoate.

It belongs to the metallo-dependent hydrolases superfamily. HutI family. Zn(2+) serves as cofactor. Fe(3+) is required as a cofactor.

Its subcellular location is the cytoplasm. It catalyses the reaction 4-imidazolone-5-propanoate + H2O = N-formimidoyl-L-glutamate. Its pathway is amino-acid degradation; L-histidine degradation into L-glutamate; N-formimidoyl-L-glutamate from L-histidine: step 3/3. Catalyzes the hydrolytic cleavage of the carbon-nitrogen bond in imidazolone-5-propanoate to yield N-formimidoyl-L-glutamate. It is the third step in the universal histidine degradation pathway. In Stenotrophomonas maltophilia (strain R551-3), this protein is Imidazolonepropionase.